Reading from the N-terminus, the 661-residue chain is Putative lipase ATG15 (661 aa).

Topologically, residues 1–3 are cytoplasmic; sequence MIW. The chain crosses the membrane as a helical; Signal-anchor for type II membrane protein span at residues 4 to 24; that stretch reads NGRLVLACVLLIAGCSGQVDA. Over 25–661 the chain is Lumenal; the sequence is ARTREQRKAF…FDDFDPKNDL (637 aa). N-linked (GlcNAc...) asparagine glycosylation is found at Asn155, Asn190, Asn212, Asn271, and Asn295. The active-site Charge relay system is Ser311. Residue Asn457 is glycosylated (N-linked (GlcNAc...) asparagine). Disordered regions lie at residues 492-559 and 574-597; these read ESTT…TSTS and TTTSATPKPSSTARTVTKTKTTTS. 3 stretches are compositionally biased toward low complexity: residues 493–513, 527–559, and 574–595; these read STTSAPTTSTSTSSSTSSTRT, TTTSSSSSISSPSATPAPTITTTSSLPTSTSTS, and TTTSATPKPSSTARTVTKTKTT.

Belongs to the AB hydrolase superfamily. Lipase family. Binds to both phosphatidylinositol (PI) and phosphatidylinositol 3,5-bisphosphate (PIP2).

Its subcellular location is the endosome. The protein localises to the multivesicular body membrane. It is found in the prevacuolar compartment membrane. It carries out the reaction a triacylglycerol + H2O = a diacylglycerol + a fatty acid + H(+). Lipase which is essential for lysis of subvacuolar cytoplasm to vacuole targeted bodies and intravacuolar autophagic bodies. Involved in the lysis of intravacuolar multivesicular body (MVB) vesicles. The intravacuolar membrane disintegration by ATG15 is critical to life span extension. This Passalora fulva (Tomato leaf mold) protein is Putative lipase ATG15 (ATG15).